A 172-amino-acid chain; its full sequence is Protein LHCP TRANSLOCATION DEFECT (172 aa).

A chloroplast-targeting transit peptide spans 1–28; that stretch reads MASIPCTFQLSARASSASAAAAARRSPR. The stretch at 114–146 is one ANK repeat; sequence PVDILLMLAASEGDKPKLEELLRAGAKYDVKDV.

It localises to the plastid. It is found in the chloroplast. Functionally, involved in the import of light-harvesting complex proteins (LHCP) and subsequent routing of these proteins to the chloroplast signal recognition particle (SRP) pathway. This is Protein LHCP TRANSLOCATION DEFECT (LTD) from Oryza sativa subsp. indica (Rice).